A 72-amino-acid chain; its full sequence is Beta-defensin 104A (72 aa).

Residues 1 to 22 form the signal peptide; that stretch reads MRRLVLLLAISLLLYQDLPVRS. 3 cysteine pairs are disulfide-bonded: C30/C57, C37/C51, and C41/C58.

This sequence belongs to the beta-defensin family.

It is found in the secreted. Has antimicrobial activity. This Pongo pygmaeus (Bornean orangutan) protein is Beta-defensin 104A (DEFB104A).